The primary structure comprises 554 residues: Nonribosomal peptide synthetase ALT12 (554 aa).

One can recognise a Carrier domain in the interval methionine 1–glutamine 76. Residue serine 35 is modified to O-(pantetheine 4'-phosphoryl)serine. The interval valine 124–threonine 434 is condensation.

This sequence belongs to the NRP synthetase family.

It participates in mycotoxin biosynthesis. Its function is as follows. Nonribosomal peptide synthetase; part of the gene cluster that mediates the biosynthesis of the host-selective toxins (HSTs) AAL-toxins, sphinganine-analog mycotoxins responsible for Alternaria stem canker on tomato by the tomato pathotype. The biosynthesis starts with the polyketide synthase ALT1-catalyzed C-16 carbon chain assembly from one starter acetyl-CoA unit with malonyl-CoA extender units. ALT1 also selectively transfers methyl groups at the first and the third cycle of chain elongation for AAL toxin. The C-16 polyketide chain is released from the enzyme by a nucleophilic attack of a carbanion, which is derived from R-carbon of glycin by decarboxylation, on the carbonyl carbon of polyketide acyl chain. This step is probably catalyzed by a pyridoxal 5'-phosphate-dependent aminoacyl transferase ALT4. The respective functions of the other enzymes encoded by the cluster have still to be elucidated. The sphingosine N-acyltransferase-like protein ALT7 seems not to act as a resistance/self-tolerance factor against the toxin in the toxin biosynthetic gene cluster, contrary to what is expected. In Alternaria alternata (Alternaria rot fungus), this protein is Nonribosomal peptide synthetase ALT12.